Reading from the N-terminus, the 692-residue chain is Ino eighty subunit 1 (692 aa).

Positions 1–25 (MGKRVYDPIHDTFQLREDNSDETKA) are enriched in basic and acidic residues. The disordered stretch occupies residues 1-133 (MGKRVYDPIH…RHLKKPDGEP (133 aa)). Serine 27 carries the phosphoserine modification. A compositionally biased stretch (polar residues) spans 28–56 (PMQSVKSGSQEEASPSSIQSETETVTTKS). Residues 64-80 (EIDDKNDDDSTQSEEEN) show a composition bias toward acidic residues. Over residues 97 to 109 (GASTATGPVTTNT) the composition is skewed to polar residues. Positions 340–385 (SKYVEVESKAQEQDMVDEQNEVKETEAENEKQESKAAYATTLFDIL) form a coiled coil. Over residues 465–485 (FMSKMEEGRKRERTNVTEVKK) the composition is skewed to basic and acidic residues. The tract at residues 465–550 (FMSKMEEGRK…VTPAAPTETE (86 aa)) is disordered. 3 positions are modified to phosphoserine: serine 487, serine 493, and serine 504. Residues 493-504 (SEEDGEGEDDKS) show a composition bias toward acidic residues. Phosphothreonine is present on threonine 507. A compositionally biased stretch (polar residues) spans 513 to 528 (SLLTPTPILESSSPMT).

In terms of assembly, component of the chromatin-remodeling INO80 complex, at least composed of ARP4, ARP5, ARP8, RVB1, RVB2, TAF14, NHP10, IES1, IES3, IES4, IES6, ACT1, IES2, IES5 and INO80.

The protein localises to the nucleus. Probably involved in transcription regulation via its interaction with the INO80 complex, a chromatin-remodeling complex. This chain is Ino eighty subunit 1 (IES1), found in Saccharomyces cerevisiae (strain ATCC 204508 / S288c) (Baker's yeast).